Reading from the N-terminus, the 231-residue chain is Dephospho-CoA kinase domain-containing protein (231 aa).

The region spanning 3 to 207 (LVGLTGGIAS…RSMEYLPLRL (205 aa)) is the DPCK domain. 8–15 (GGIASGKS) provides a ligand contact to ATP.

The protein belongs to the CoaE family.

The chain is Dephospho-CoA kinase domain-containing protein (Dcakd) from Mus musculus (Mouse).